Consider the following 270-residue polypeptide: Transmembrane protein 176B (270 aa).

4 consecutive transmembrane segments (helical) span residues L65 to L85, A95 to V115, I127 to V147, and L209 to L229. S236, S245, S254, and S258 each carry phosphoserine. Positions S237–L270 are disordered. Positions S260–L270 are enriched in polar residues.

This sequence belongs to the TMEM176 family. Expressed in lung and dermal fibroblasts.

It localises to the nucleus membrane. Its function is as follows. May play a role in the process of maturation of dendritic cells. Required for the development of cerebellar granule cells. In Homo sapiens (Human), this protein is Transmembrane protein 176B (TMEM176B).